The sequence spans 242 residues: NADPH-dependent pterin aldehyde reductase (242 aa).

Residue Thr-2 is modified to N-acetylthreonine. Residue 21–50 (LITGVSKGLGRALALELAKRGHTVIGCARS) coordinates NADP(+). Ser-153 serves as a coordination point for substrate. Tyr-166 serves as the catalytic Proton acceptor. Lys-170 provides a ligand contact to NADP(+).

Belongs to the short-chain dehydrogenases/reductases (SDR) family. Homodimer. Mostly expressed in seeds, and, to a lower extent, in roots, leaves, flowers and siliques.

The protein localises to the cytoplasm. Functionally, NADPH-dependent pterin aldehyde reductase involved in pterin aldehyde salvage during folate turnover. Catalyzes the reduction of diverse aromatic and aliphatic aldehydes (e.g. acetaldehyde, n-propanal, 1-naphthaldehyde, benzaldehyde, cinnamaldehyde, n-butanal, n-hexanal, n-pentanal, 2-naphthaldehyde, n-octanal, n-nonanal and n-heptanal), in addition to the conversion of pterin-6-aldehyde (PtCHO) to 6-hydroxymethylpterin (PtCH(2)OH), and the conversion of dihydropterin-6-aldehyde (H(2)PtCHO) to 6-hydroxymethyldihydropterin (H(2)PtCH(2)OH). Cannot reduce the pterin ring. The chain is NADPH-dependent pterin aldehyde reductase from Arabidopsis thaliana (Mouse-ear cress).